We begin with the raw amino-acid sequence, 339 residues long: Anthranilate phosphoribosyltransferase (339 aa).

5-phospho-alpha-D-ribose 1-diphosphate-binding positions include Gly82, 85–86, 92–95, 110–118, and Ser122; these read GD, NIST, and KHGNSSISS. Position 82 (Gly82) interacts with anthranilate. Position 94 (Ser94) interacts with Mg(2+). Asn113 contacts anthranilate. An anthranilate-binding site is contributed by Arg168. 2 residues coordinate Mg(2+): Asp227 and Glu228.

It belongs to the anthranilate phosphoribosyltransferase family. As to quaternary structure, homodimer. Requires Mg(2+) as cofactor.

It carries out the reaction N-(5-phospho-beta-D-ribosyl)anthranilate + diphosphate = 5-phospho-alpha-D-ribose 1-diphosphate + anthranilate. The protein operates within amino-acid biosynthesis; L-tryptophan biosynthesis; L-tryptophan from chorismate: step 2/5. Catalyzes the transfer of the phosphoribosyl group of 5-phosphorylribose-1-pyrophosphate (PRPP) to anthranilate to yield N-(5'-phosphoribosyl)-anthranilate (PRA). This Ruthia magnifica subsp. Calyptogena magnifica protein is Anthranilate phosphoribosyltransferase.